Consider the following 511-residue polypeptide: Probable endopeptidase p60 (511 aa).

The signal sequence occupies residues 1-27 (MNMKKATIVSAAGIAVTAFAAPSVVSA). The 44-residue stretch at 28 to 71 (NTVVVASGDTLWGIASKTGTTVDQLKQLNKLDSDRIVPGQKLTI) folds into the LysM 1 domain. Positions 78–142 (KVEKSVSATW…VNGKYLSDAK (65 aa)) constitute an SH3b domain. The LysM 2 domain occupies 175-218 (STYKVKSGDTIWALSVKYGVPVQKLIEWNNLSSSSIYVGQTIAV). 2 stretches are compositionally biased toward low complexity: residues 229-257 (TVKQ…QAKP) and 264-282 (KPAV…AKPA). A disordered region spans residues 229-291 (TVKQAAPAKV…AVEQKASTPA (63 aa)). The LysM 3 domain occupies 297–341 (ATYKVQNGDSLGKIASLFKVSVADLTNWNNLNATITIYAGQELSV). Low complexity-rich tracts occupy residues 347–362 (KPKP…SKPA) and 372–390 (TNTT…NTSQ). A disordered region spans residues 347–390 (KPKPAAPAKPAVSKPATSTPAKVTPTNTTNNSTPTTNVNNNTSQ). In terms of domain architecture, NlpC/P60 spans 393-511 (SASFSALYAE…GQYLVGFGRV (119 aa)). Cys423 serves as the catalytic Nucleophile. The active-site Proton acceptor is the His473. The active site involves Asp485.

This sequence belongs to the peptidase C40 family.

This major extracellular protein may be involved in the invasion of non-professional phagocytic cells by Listeria. The sequence is that of Probable endopeptidase p60 (iap) from Listeria grayi (Listeria murrayi).